The chain runs to 415 residues: Histidine--tRNA ligase (415 aa).

It belongs to the class-II aminoacyl-tRNA synthetase family. Homodimer.

Its subcellular location is the cytoplasm. The catalysed reaction is tRNA(His) + L-histidine + ATP = L-histidyl-tRNA(His) + AMP + diphosphate + H(+). In Phytoplasma australiense, this protein is Histidine--tRNA ligase.